The sequence spans 169 residues: Cytochrome c oxidase subunit 4 isoform 1, mitochondrial (169 aa).

A mitochondrion-targeting transit peptide spans 1 to 22 (MLATRALSLIGKRAISTSVCLR). Residues 23-98 (AHGSVVKSED…SFAEMNKGTN (76 aa)) lie on the Mitochondrial matrix side of the membrane. Lys-29 bears the N6-acetyllysine; alternate mark. Lys-29 bears the N6-succinyllysine; alternate mark. N6-acetyllysine is present on Lys-53. Residues Ser-56 and Ser-58 each carry the phosphoserine modification. The residue at position 60 (Lys-60) is an N6-acetyllysine; alternate. Lys-60 carries the N6-succinyllysine; alternate modification. Residue Lys-67 is modified to N6-acetyllysine. A helical membrane pass occupies residues 99-124 (EWKTVVGLAMFFIGFTALVLIWEKSY). At 125–169 (VYGPIPHTFDRDWVAMQTKRMLDMKVNPIQGFSAKWDYNKNEWKK) the chain is on the mitochondrial intermembrane side.

It belongs to the cytochrome c oxidase IV family. Component of the cytochrome c oxidase (complex IV, CIV), a multisubunit enzyme composed of 14 subunits. The complex is composed of a catalytic core of 3 subunits MT-CO1, MT-CO2 and MT-CO3, encoded in the mitochondrial DNA, and 11 supernumerary subunits COX4I, COX5A, COX5B, COX6A, COX6B, COX6C, COX7A, COX7B, COX7C, COX8 and NDUFA4, which are encoded in the nuclear genome. The complex exists as a monomer or a dimer and forms supercomplexes (SCs) in the inner mitochondrial membrane with NADH-ubiquinone oxidoreductase (complex I, CI) and ubiquinol-cytochrome c oxidoreductase (cytochrome b-c1 complex, complex III, CIII), resulting in different assemblies (supercomplex SCI(1)III(2)IV(1) and megacomplex MCI(2)III(2)IV(2)). Interacts with PHB2; the interaction decreases in absence of SPHK2. Interacts with AFG1L. Interacts with ABCB7; this interaction allows the regulation of cellular iron homeostasis and cellular reactive oxygen species (ROS) levels in cardiomyocytes. Interacts with FLVCR2; this interaction occurs in the absence of heme and is disrupted upon heme binding. Interacts with IRGC.

Its subcellular location is the mitochondrion inner membrane. Its pathway is energy metabolism; oxidative phosphorylation. In terms of biological role, component of the cytochrome c oxidase, the last enzyme in the mitochondrial electron transport chain which drives oxidative phosphorylation. The respiratory chain contains 3 multisubunit complexes succinate dehydrogenase (complex II, CII), ubiquinol-cytochrome c oxidoreductase (cytochrome b-c1 complex, complex III, CIII) and cytochrome c oxidase (complex IV, CIV), that cooperate to transfer electrons derived from NADH and succinate to molecular oxygen, creating an electrochemical gradient over the inner membrane that drives transmembrane transport and the ATP synthase. Cytochrome c oxidase is the component of the respiratory chain that catalyzes the reduction of oxygen to water. Electrons originating from reduced cytochrome c in the intermembrane space (IMS) are transferred via the dinuclear copper A center (CU(A)) of subunit 2 and heme A of subunit 1 to the active site in subunit 1, a binuclear center (BNC) formed by heme A3 and copper B (CU(B)). The BNC reduces molecular oxygen to 2 water molecules using 4 electrons from cytochrome c in the IMS and 4 protons from the mitochondrial matrix. In Rattus norvegicus (Rat), this protein is Cytochrome c oxidase subunit 4 isoform 1, mitochondrial (Cox4i1).